The chain runs to 171 residues: Methylated-DNA--protein-cysteine methyltransferase (171 aa).

The Nucleophile; methyl group acceptor role is filled by Cys-139.

Belongs to the MGMT family.

The protein localises to the cytoplasm. The enzyme catalyses a 6-O-methyl-2'-deoxyguanosine in DNA + L-cysteinyl-[protein] = S-methyl-L-cysteinyl-[protein] + a 2'-deoxyguanosine in DNA. It carries out the reaction a 4-O-methyl-thymidine in DNA + L-cysteinyl-[protein] = a thymidine in DNA + S-methyl-L-cysteinyl-[protein]. Functionally, involved in the cellular defense against the biological effects of O6-methylguanine (O6-MeG) and O4-methylthymine (O4-MeT) in DNA. Repairs the methylated nucleobase in DNA by stoichiometrically transferring the methyl group to a cysteine residue in the enzyme. This is a suicide reaction: the enzyme is irreversibly inactivated. The protein is Methylated-DNA--protein-cysteine methyltransferase of Salmonella typhi.